A 418-amino-acid chain; its full sequence is ATP-dependent Clp protease ATP-binding subunit ClpX (418 aa).

The 54-residue stretch at 1-54 (MTRKDDESDQFFCSFCGKNQKEVKKLIAGPSVYICNECVSLCEEIIEDEDKESL) folds into the ClpX-type ZB domain. Zn(2+) contacts are provided by Cys-13, Cys-16, Cys-35, and Cys-38. An ATP-binding site is contributed by 120–127 (PTGCGKTL).

It belongs to the ClpX chaperone family. As to quaternary structure, component of the ClpX-ClpP complex. Forms a hexameric ring that, in the presence of ATP, binds to fourteen ClpP subunits assembled into a disk-like structure with a central cavity, resembling the structure of eukaryotic proteasomes.

Functionally, ATP-dependent specificity component of the Clp protease. It directs the protease to specific substrates. Can perform chaperone functions in the absence of ClpP. In Desulforapulum autotrophicum (strain ATCC 43914 / DSM 3382 / VKM B-1955 / HRM2) (Desulfobacterium autotrophicum), this protein is ATP-dependent Clp protease ATP-binding subunit ClpX.